Consider the following 524-residue polypeptide: Cytochrome P450 monooxygenase lnaC (524 aa).

The chain crosses the membrane as a helical span at residues 16-36 (ALAVSCIAVSLFLLSPWIAYA). N-linked (GlcNAc...) asparagine glycosylation occurs at asparagine 150. Residue cysteine 471 participates in heme binding.

This sequence belongs to the cytochrome P450 family. Requires heme as cofactor.

It is found in the membrane. It participates in secondary metabolite biosynthesis. Functionally, cytochrome P450 monooxygenase; part of the lna gene cluster that mediates the biosynthesis of diastereomeric piperazines. Lna and lnb clusters encode sets of enzymes that produce overlapping sets of previously undescribed metabolites such as piperazinomycin-like metabolites or morpholine. The lna and lnb biosynthetic pathways appear to be part of a signaling network that controls the formation of sclerotia, a resilient overwintering structure. One primary function of the non-canonical nonribosomal peptide synthetases lnaA and lnbA consists in the reduction of L-tyrosine. The presence in the clusters of tailoring enzymes such as the oxidoreductases lnaB, lnbB, lnaE or lnbE, as well as of the cytochrome P450 monooxygenases lnaC, lnaD, or lnbC, might explain formation of various diastereomeric piperazines. The protein is Cytochrome P450 monooxygenase lnaC of Aspergillus flavus (strain ATCC 200026 / FGSC A1120 / IAM 13836 / NRRL 3357 / JCM 12722 / SRRC 167).